Consider the following 85-residue polypeptide: Cell division topological specificity factor (85 aa).

It belongs to the MinE family.

In terms of biological role, prevents the cell division inhibition by proteins MinC and MinD at internal division sites while permitting inhibition at polar sites. This ensures cell division at the proper site by restricting the formation of a division septum at the midpoint of the long axis of the cell. The polypeptide is Cell division topological specificity factor (Deinococcus geothermalis (strain DSM 11300 / CIP 105573 / AG-3a)).